The sequence spans 312 residues: Heme oxygenase 2 (312 aa).

Residue Ser2 is modified to N-acetylserine. Phosphoserine is present on Ser2. His41 provides a ligand contact to heme b. HRM repeat units lie at residues 260–265 (KCPYYA) and 277–282 (SCPFRA). S-nitrosocysteine occurs at positions 261 and 278.

The protein belongs to the heme oxygenase family. S-nitrosylated by BLVRB.

The protein localises to the microsome. Its subcellular location is the endoplasmic reticulum. It carries out the reaction heme b + 3 reduced [NADPH--hemoprotein reductase] + 3 O2 = biliverdin IXalpha + CO + Fe(2+) + 3 oxidized [NADPH--hemoprotein reductase] + 3 H2O + H(+). Its function is as follows. Heme oxygenase cleaves the heme ring at the alpha methene bridge to form biliverdin. Biliverdin is subsequently converted to bilirubin by biliverdin reductase. Under physiological conditions, the activity of heme oxygenase is highest in the spleen, where senescent erythrocytes are sequestrated and destroyed. Heme oxygenase 2 could be implicated in the production of carbon monoxide in brain where it could act as a neurotransmitter. The chain is Heme oxygenase 2 (HMOX2) from Oryctolagus cuniculus (Rabbit).